Here is a 220-residue protein sequence, read N- to C-terminus: Adenylate kinase (220 aa).

10–15 (GAGKGT) contacts ATP. The interval 30–59 (STGDMLRAAVKAGTPLGLKAKEVMDGGNLV) is NMP. AMP is bound by residues T31, R36, 57–59 (NLV), 85–88 (GFPR), and Q92. Residues 122 to 159 (GRRVHPASGRTYHIRFNPPQTAGMDDETGEPLVQRADD) form an LID region. ATP contacts are provided by residues R123 and 132-133 (TY). AMP-binding residues include R156 and R167. An ATP-binding site is contributed by G205.

The protein belongs to the adenylate kinase family. As to quaternary structure, monomer.

It is found in the cytoplasm. The catalysed reaction is AMP + ATP = 2 ADP. Its pathway is purine metabolism; AMP biosynthesis via salvage pathway; AMP from ADP: step 1/1. In terms of biological role, catalyzes the reversible transfer of the terminal phosphate group between ATP and AMP. Plays an important role in cellular energy homeostasis and in adenine nucleotide metabolism. This Chlorobium luteolum (strain DSM 273 / BCRC 81028 / 2530) (Pelodictyon luteolum) protein is Adenylate kinase.